A 172-amino-acid chain; its full sequence is Probable tryptophan transport protein (172 aa).

Transmembrane regions (helical) follow at residues 7-29 (VIMA…FLGG), 49-71 (VQNV…AFPA), 104-126 (AVLT…LLIV), and 136-158 (FAAV…YPIV).

The protein belongs to the vitamin uptake transporter (VUT/ECF) (TC 2.A.88) family. TrpP subfamily.

It localises to the cell membrane. Functionally, probably involved in tryptophan uptake. This chain is Probable tryptophan transport protein (trpP), found in Bacillus subtilis (strain 168).